The primary structure comprises 667 residues: Protein MAIN-LIKE 2 (667 aa).

Position 1 is an N-acetylmethionine (Met1). The segment covering Met492–Lys508 has biased composition (basic residues). 2 disordered regions span residues Met492–Ser523 and Lys594–Ala667. Acidic residues predominate over residues Pro512–Ser523. Composition is skewed to basic and acidic residues over residues Tyr608–Lys618 and Ser656–Ala667.

In terms of tissue distribution, expressed in root tips, the shoot apical meristem (SAM), leaves, mature flowers and embryos.

Its subcellular location is the nucleus. In terms of biological role, maybe required to maintain cell division activity in meristematic cells. The protein is Protein MAIN-LIKE 2 of Arabidopsis thaliana (Mouse-ear cress).